The primary structure comprises 654 residues: Smc-like protein Sph3 (654 aa).

Coiled-coil stretches lie at residues 135-290 (TDAI…LQTV) and 341-503 (IRGT…LTAA).

It belongs to the Sph1/Sph2 family.

In terms of biological role, involved in cell-shape determination. Required for the formation of rods and wild-type-like motility. This Haloferax volcanii (strain ATCC 29605 / DSM 3757 / JCM 8879 / NBRC 14742 / NCIMB 2012 / VKM B-1768 / DS2) (Halobacterium volcanii) protein is Smc-like protein Sph3.